The chain runs to 1017 residues: MGKKSRAVPGRRPILQLSPPGPRGSTPGRDPEPEPDTEPDSTAAVPSQPAPSAATTTTTAVTAAAASDDSPSEDEQEAVQEVPRVVQNPPKPVMTTRPTAVKATGGLCLLGAYADSDDDDNDVSEKLAQSKETNGNQSTDIDSTLANFLAEIDAITAPQPAAPVGASAPPPTPPRPEPKEAATSTLSSSTSNGTDSTQTSGWQYDTQCSLAGVGIEMGDWQEVWDENTGCYYYWNTQTNEVTWELPQYLATQVQGLQHYQPSSVPGAETSFVVNTDIYSKEKTISVSSSKSGPVIAKREVKKEVNEGIQALSNSEEEKKGVAASLLAPLLPEGIKEEEERWRRKVICKEEPVSEVKETSTTVEEATTIVKPQEIMLDNIEDPSQEDLCSVVQSGESEEEEEQDTLELELVLERKKAELRALEEGDGSVSGSSPRSDISQPASQDGMRRLMSKRGKWKMFVRATSPESTSRSSSKTGRDTPENGETAIGAENSEKIDENSDKEMEVEESPEKIKVQTTPKVEEEQDLKFQIGELANTLTSKFEFLGINRQSISNFHVLLLQTETRIADWREGALNGNYLKRKLQDAAEQLKQYEINATPKGWSCHWDRDHRRYFYVNEQSGESQWEFPDGEEEEEESQAQENRDETLAKQTLKDKTGTDSNSTESSETSTGSLCKESFSGQVSSSSLMPLTPFWTLLQSNVPVLQPPLPLEMPPPPPPPPESPPPPPPPPPPAEDGEIQEVEMEDEGSEEPPAPGTEEDTPLKPSAQTTVVTSQSSVDSTISSSSSTKGIKRKATEISTAVVQRSATIGSSPVLYSQSAIATGHQAAGIGNQATGIGHQTIPVSLPAAGMGHQARGMSLQSNYLGLAAAPAIMSYAECSVPIGVTAPSLQPVQARGAVPTATIIEPPPPPPPPPPPPPPAPKMPPPEKTKKGRKDKAKKSKTKMPSLVKKWQSIQRELDEEDNSSSSEEDRESTAQKRIEEWKQQQLVSGMAERNANFEALPEDWRARLKRRKMAPNT.

2 disordered regions span residues 1–141 and 160–202; these read MGKK…STDI and PAAP…TSGW. Residue S18 is modified to Phosphoserine. A compositionally biased stretch (low complexity) spans 40 to 69; that stretch reads DSTAAVPSQPAPSAATTTTTAVTAAAASDD. Residues S116 and S124 each carry the phosphoserine modification. Polar residues predominate over residues 130–141; the sequence is SKETNGNQSTDI. T172 bears the Phosphothreonine mark. The span at 181–200 shows a compositional bias: low complexity; it reads AATSTLSSSTSNGTDSTQTS. In terms of domain architecture, WW 1 spans 214–248; the sequence is GIEMGDWQEVWDENTGCYYYWNTQTNEVTWELPQY. K290 carries the post-translational modification N6-acetyllysine. K301 participates in a covalent cross-link: Glycyl lysine isopeptide (Lys-Gly) (interchain with G-Cter in SUMO1). K335 is covalently cross-linked (Glycyl lysine isopeptide (Lys-Gly) (interchain with G-Cter in SUMO2)). K348 is covalently cross-linked (Glycyl lysine isopeptide (Lys-Gly) (interchain with G-Cter in SUMO1); alternate). K348 participates in a covalent cross-link: Glycyl lysine isopeptide (Lys-Gly) (interchain with G-Cter in SUMO2); alternate. Disordered stretches follow at residues 421-519, 621-676, 706-792, and 899-994; these read LEEG…TTPK, ESQW…CKES, PLPL…IKRK, and TATI…AERN. S427, S432, S435, S438, and S442 each carry phosphoserine. Over residues 428 to 442 the composition is skewed to polar residues; the sequence is VSGSSPRSDISQPAS. Basic residues predominate over residues 449–458; the sequence is LMSKRGKWKM. Residues 461-474 show a composition bias toward low complexity; the sequence is RATSPESTSRSSSK. S464 is modified (phosphoserine). Residue T479 is modified to Phosphothreonine. Basic and acidic residues predominate over residues 491-513; sequence NSEKIDENSDKEMEVEESPEKIK. A phosphoserine mark is found at S499 and S508. Residues T516 and T517 each carry the phosphothreonine modification. A Glycyl lysine isopeptide (Lys-Gly) (interchain with G-Cter in SUMO1); alternate cross-link involves residue K519. A Glycyl lysine isopeptide (Lys-Gly) (interchain with G-Cter in SUMO2); alternate cross-link involves residue K519. The region spanning 595–629 is the WW 2 domain; it reads NATPKGWSCHWDRDHRRYFYVNEQSGESQWEFPDG. A compositionally biased stretch (acidic residues) spans 627–637; sequence PDGEEEEEESQ. A compositionally biased stretch (basic and acidic residues) spans 640–656; sequence ENRDETLAKQTLKDKTG. The segment covering 657–671 has biased composition (low complexity); that stretch reads TDSNSTESSETSTGS. The segment covering 706-732 has biased composition (pro residues); the sequence is PLPLEMPPPPPPPPESPPPPPPPPPPA. Residues 733–748 show a composition bias toward acidic residues; the sequence is EDGEIQEVEMEDEGSE. Residues 764–786 are compositionally biased toward low complexity; the sequence is SAQTTVVTSQSSVDSTISSSSST. Residues 904–925 show a composition bias toward pro residues; sequence EPPPPPPPPPPPPPPAPKMPPP. Over residues 929–941 the composition is skewed to basic residues; sequence KKGRKDKAKKSKT. Over residues 957–970 the composition is skewed to acidic residues; it reads LDEEDNSSSSEEDR. Phosphoserine is present on residues S963, S964, and S965. Residues 971–982 are compositionally biased toward basic and acidic residues; it reads ESTAQKRIEEWK.

In terms of assembly, binds FMN1. Interacts with the Arg/Gly-rich-flanked Pro-rich of KHDRBS1/SAM68. Arginine methylation in these regions has no effect on this binding. In terms of tissue distribution, highly expressed in the eye.

The sequence is that of Formin-binding protein 4 (FNBP4) from Homo sapiens (Human).